The primary structure comprises 483 residues: Cobyric acid synthase (483 aa).

Positions 252–439 (KLKVVVPVLT…LHGFLDSEAV (188 aa)) constitute a GATase cobBQ-type domain. Cysteine 333 (nucleophile) is an active-site residue. The active site involves histidine 431.

It belongs to the CobB/CobQ family. CobQ subfamily.

The protein operates within cofactor biosynthesis; adenosylcobalamin biosynthesis. Its function is as follows. Catalyzes amidations at positions B, D, E, and G on adenosylcobyrinic A,C-diamide. NH(2) groups are provided by glutamine, and one molecule of ATP is hydrogenolyzed for each amidation. This Vibrio vulnificus (strain CMCP6) protein is Cobyric acid synthase.